The primary structure comprises 574 residues: Efflux pump FUB11 (574 aa).

Positions 1-44 are disordered; it reads MAIDPQPSSPSLSSETIANDTIGNDNNVNEPSVEPKTQEHQHTV. Residues 9–30 show a composition bias toward polar residues; that stretch reads SPSLSSETIANDTIGNDNNVNE. N19 carries an N-linked (GlcNAc...) asparagine glycan. The next 11 helical transmembrane spans lie at 116–136, 148–168, 176–196, 208–228, 235–255, 318–338, 348–368, 394–414, 419–439, 449–469, and 484–504; these read VATLGISLYVLGFTFGPLIWA, FFFTFMVATAFSAGAAGAGSI, FLTGSIGSAPLSNAPALIADM, MFSGAPFLGPAIGPIAGGFLG, WLHGLMAAFTGVTWIACTVFI, IYISIIYGTMYMCFAAFPIVF, IGGLAFTGIVIGVILSIISFA, AIMGSLLIPIGLFWFAWTTFA, IVPIIGTVFFAWGLVLVFMAL, IFAASIMAANSALRSLFGAAF, and WASSIPAFLALACVPFPFLFY. A disordered region spans residues 552–574; the sequence is HNSHTSATHSHGHRRSLSCTRSV.

This sequence belongs to the major facilitator superfamily. DHA1 family. Polyamines/proton antiporter (TC 2.A.1.2.16) subfamily.

Its subcellular location is the cell membrane. Its function is as follows. Efflux pump involved in export of fusaric acid, a mycotoxin with low to moderate toxicity to animals and humans, but with high phytotoxic properties. Constitutes a self-protecting mechanism of the fungus against critical levels of fusaric acid within the cell. This is Efflux pump FUB11 from Gibberella fujikuroi (strain CBS 195.34 / IMI 58289 / NRRL A-6831) (Bakanae and foot rot disease fungus).